The primary structure comprises 85 residues: MSSLDKTMHFDFNQNKGKNVYDTLQDVYNALEEKGYNPVNQIVGYLLSGDPAYIPRHNDARNLILKHERDEIIEELVKSYLGKNK.

The protein belongs to the UPF0297 family.

The protein is UPF0297 protein lhv_0439 of Lactobacillus helveticus (strain DPC 4571).